A 329-amino-acid chain; its full sequence is uncharacterized protein (329 aa).

A disordered region spans residues 109–147 (KALGNDQTSSMTSSTTAVTVAKSGDGQQQTGEQKEEDWK). The span at 116 to 131 (TSSMTSSTTAVTVAKS) shows a compositional bias: low complexity.

To the C-terminal of MG321/MPN_456.

This is an uncharacterized protein from Mycoplasma pneumoniae (strain ATCC 29342 / M129 / Subtype 1) (Mycoplasmoides pneumoniae).